We begin with the raw amino-acid sequence, 1131 residues long: Phytochrome a (1131 aa).

A compositionally biased stretch (low complexity) spans methionine 1–arginine 23. A disordered region spans residues methionine 1 to alanine 26. Residues serine 219–phenylalanine 404 form the GAF domain. Cysteine 324 provides a ligand contact to phytochromobilin. PAS domains lie at valine 620–lysine 690 and valine 750–glutamate 834. Residues tyrosine 904–alanine 1124 form the Histidine kinase domain.

It belongs to the phytochrome family. In terms of assembly, homodimer. Post-translationally, contains one covalently linked phytochromobilin chromophore.

Functionally, regulatory photoreceptor which exists in two forms that are reversibly interconvertible by light: the Pr form that absorbs maximally in the red region of the spectrum and the Pfr form that absorbs maximally in the far-red region. Photoconversion of Pr to Pfr induces an array of morphogenic responses, whereas reconversion of Pfr to Pr cancels the induction of those responses. Pfr controls the expression of a number of nuclear genes including those encoding the small subunit of ribulose-bisphosphate carboxylase, chlorophyll A/B binding protein, protochlorophyllide reductase, rRNA, etc. It also controls the expression of its own gene(s) in a negative feedback fashion. The chain is Phytochrome a (PHYA) from Sorghum bicolor (Sorghum).